The chain runs to 235 residues: Large ribosomal subunit protein uL1 (235 aa).

This sequence belongs to the universal ribosomal protein uL1 family. As to quaternary structure, part of the 50S ribosomal subunit.

Its function is as follows. Binds directly to 23S rRNA. The L1 stalk is quite mobile in the ribosome, and is involved in E site tRNA release. Functionally, protein L1 is also a translational repressor protein, it controls the translation of the L11 operon by binding to its mRNA. The sequence is that of Large ribosomal subunit protein uL1 from Synechococcus sp. (strain WH7803).